Consider the following 204-residue polypeptide: Inositol diphosphatase DSP2 (204 aa).

Residues 1 to 27 form a disordered region; it reads MQLEISPRQRSQQQKEEEGEHQQRAGE. Over residues 13-27 the composition is skewed to basic and acidic residues; sequence QQKEEEGEHQQRAGE. The Tyrosine-protein phosphatase domain maps to 51–203; the sequence is NFAEVNDGIF…SSLMHLTASQ (153 aa). Residues 107-119 form a WPD loop important for active site topology region; it reads FGIDGSKELLVNI. Residues Asn-118, Ile-119, and Lys-123 each contribute to the 1D-myo-inositol hexakisphosphate site. The active-site Phosphocysteine intermediate is Cys-143.

The protein belongs to the protein-tyrosine phosphatase family. Atypical dual-specificity phosphatase Siw14-like subfamily. Expressed in roots and young panicles.

Its subcellular location is the cytoplasm. It is found in the nucleus. The enzyme catalyses 5-diphospho-1D-myo-inositol 1,2,3,4,6-pentakisphosphate + H2O = 1D-myo-inositol hexakisphosphate + phosphate + H(+). It catalyses the reaction 1,5-bis(diphospho)-1D-myo-inositol 2,3,4,6-tetrakisphosphate + H2O = 1-diphospho-1D-myo-inositol 2,3,4,5,6-pentakisphosphate + phosphate + 2 H(+). It carries out the reaction 3,5-bis(diphospho)-1D-myo-inositol 1,2,4,6-tetrakisphosphate + H2O = 3-diphospho-1D-myo-inositol 1,2,4,5,6-pentakisphosphate + phosphate + 2 H(+). The catalysed reaction is 6-diphospho-1D-myo-inositol pentakisphosphate + H2O = 1D-myo-inositol hexakisphosphate + phosphate + H(+). In terms of biological role, cleaves the beta-phosphate at the 5-position of soluble inositol pyrophosphates. Has highest activity on 5-diphosphoinositol 1,2,3,4,6-pentakisphosphate (5-InsP(7)). Acts as a negative regulator of defense responses against the fungal pathogen Magnaporthe oryzae. This chain is Inositol diphosphatase DSP2, found in Oryza sativa subsp. japonica (Rice).